A 453-amino-acid chain; its full sequence is Bifunctional protein GlmU (453 aa).

Residues 1-231 (MERTCLAVIL…EIEMTGCNNR (231 aa)) are pyrophosphorylase. UDP-N-acetyl-alpha-D-glucosamine is bound by residues 10–13 (LAAG), Lys-24, Gln-77, 82–83 (GT), 105–107 (YGD), Gly-143, Glu-157, Asn-172, and Asn-229. Asp-107 serves as a coordination point for Mg(2+). Asn-229 lines the Mg(2+) pocket. The tract at residues 232–252 (AELAVIERFWQERRRREMMLA) is linker. An N-acetyltransferase region spans residues 253–453 (GVTMIAPETV…AIKAAKKAEA (201 aa)). UDP-N-acetyl-alpha-D-glucosamine-binding residues include Arg-318 and Lys-336. The active-site Proton acceptor is His-348. The UDP-N-acetyl-alpha-D-glucosamine site is built by Tyr-351 and Asn-362. Acetyl-CoA-binding positions include Ala-365, 371–372 (NY), Ser-390, Ser-408, and Arg-425.

The protein in the N-terminal section; belongs to the N-acetylglucosamine-1-phosphate uridyltransferase family. It in the C-terminal section; belongs to the transferase hexapeptide repeat family. Homotrimer. The cofactor is Mg(2+).

The protein localises to the cytoplasm. The catalysed reaction is alpha-D-glucosamine 1-phosphate + acetyl-CoA = N-acetyl-alpha-D-glucosamine 1-phosphate + CoA + H(+). It catalyses the reaction N-acetyl-alpha-D-glucosamine 1-phosphate + UTP + H(+) = UDP-N-acetyl-alpha-D-glucosamine + diphosphate. It functions in the pathway nucleotide-sugar biosynthesis; UDP-N-acetyl-alpha-D-glucosamine biosynthesis; N-acetyl-alpha-D-glucosamine 1-phosphate from alpha-D-glucosamine 6-phosphate (route II): step 2/2. Its pathway is nucleotide-sugar biosynthesis; UDP-N-acetyl-alpha-D-glucosamine biosynthesis; UDP-N-acetyl-alpha-D-glucosamine from N-acetyl-alpha-D-glucosamine 1-phosphate: step 1/1. It participates in bacterial outer membrane biogenesis; LPS lipid A biosynthesis. Catalyzes the last two sequential reactions in the de novo biosynthetic pathway for UDP-N-acetylglucosamine (UDP-GlcNAc). The C-terminal domain catalyzes the transfer of acetyl group from acetyl coenzyme A to glucosamine-1-phosphate (GlcN-1-P) to produce N-acetylglucosamine-1-phosphate (GlcNAc-1-P), which is converted into UDP-GlcNAc by the transfer of uridine 5-monophosphate (from uridine 5-triphosphate), a reaction catalyzed by the N-terminal domain. In Rhizobium etli (strain ATCC 51251 / DSM 11541 / JCM 21823 / NBRC 15573 / CFN 42), this protein is Bifunctional protein GlmU.